The sequence spans 817 residues: Trehalose-phosphatase (817 aa).

Residues 1–547 (MSVYGKIPST…LAATKTDQRI (547 aa)) form a glycosyltransferase region.

This sequence in the N-terminal section; belongs to the glycosyltransferase 20 family. In the C-terminal section; belongs to the trehalose phosphatase family. In terms of assembly, component of the trehalose synthase complex that contains at least tps1, ntp1, and tpp1. Interacts with tps1. Interacts with ntp1. Mg(2+) serves as cofactor.

It carries out the reaction alpha,alpha-trehalose 6-phosphate + H2O = alpha,alpha-trehalose + phosphate. The protein operates within carbohydrate biosynthesis. Functionally, phosphatase catalytic subunit of the trehalose synthase complex that catalyzes the production of trehalose from glucose-6-phosphate and UDP-alpha-D-glucose in a two step process. The disaccharide trehalose serves as a storage carbohydrate that is mobilized during nutrient stress and spore germination. Together with ntp1, regulates the level of trehalose as a protectant for cell integrity during thermal, osmotic, and oxidative stress. In Schizosaccharomyces pombe (strain 972 / ATCC 24843) (Fission yeast), this protein is Trehalose-phosphatase.